The primary structure comprises 399 residues: LEM domain-containing protein Bocksbeutel (399 aa).

In terms of domain architecture, LEM spans L4–V48. Disordered stretches follow at residues P49–R103, S119–V141, and N233–A287. Composition is skewed to polar residues over residues H68–S77 and G89–S99. The span at N233–F256 shows a compositional bias: polar residues. A helical membrane pass occupies residues F377–P397.

The protein resides in the nucleus inner membrane. It localises to the cytoplasm. It is found in the nucleus. Its subcellular location is the nucleoplasm. The protein localises to the endoplasmic reticulum. Functionally, inner nuclear membrane protein. May have a role in maintaining the structural integrity of the nuclear lamina. During pupal development, plays essential and redundant functions with the other LEM domain proteins; MAN1 and Ote. Also has a redundant but important role with Ote in larval development. This is LEM domain-containing protein Bocksbeutel from Drosophila melanogaster (Fruit fly).